Consider the following 130-residue polypeptide: Small ribosomal subunit protein uS9 (130 aa).

Belongs to the universal ribosomal protein uS9 family.

In Shigella flexneri, this protein is Small ribosomal subunit protein uS9 (rpsI).